A 498-amino-acid polypeptide reads, in one-letter code: ATP synthase subunit beta, chloroplastic (498 aa).

Residue 172-179 (GGAGVGKT) coordinates ATP.

It belongs to the ATPase alpha/beta chains family. In terms of assembly, F-type ATPases have 2 components, CF(1) - the catalytic core - and CF(0) - the membrane proton channel. CF(1) has five subunits: alpha(3), beta(3), gamma(1), delta(1), epsilon(1). CF(0) has four main subunits: a(1), b(1), b'(1) and c(9-12).

Its subcellular location is the plastid. It is found in the chloroplast thylakoid membrane. The enzyme catalyses ATP + H2O + 4 H(+)(in) = ADP + phosphate + 5 H(+)(out). Its function is as follows. Produces ATP from ADP in the presence of a proton gradient across the membrane. The catalytic sites are hosted primarily by the beta subunits. The sequence is that of ATP synthase subunit beta, chloroplastic from Spinacia oleracea (Spinach).